An 883-amino-acid chain; its full sequence is Chromatin structure-remodeling complex protein RSC30 (883 aa).

The segment at residues 14-45 (ACTQCRKRKIGCDRAKPICGNCVKYNKPDCFY) is a DNA-binding region (zn(2)-C6 fungal-type). Disordered stretches follow at residues 121-157 (QNNN…DVPS) and 241-273 (NTTA…TSRT). Residues 130–149 (APRQNSSTVSSNVHGNTIVR) show a composition bias toward polar residues. Position 150 is a phosphoserine (Ser-150). Positions 241-251 (NTTANKINKTG) are enriched in polar residues. Positions 252 to 270 (ENSKKGKVDGKRAGFDHQT) are enriched in basic and acidic residues.

As to quaternary structure, forms a heteromer with RSC3. Interacts with NPL6. Component of the two forms of the RSC complex composed of at least either RSC1 or RSC2, and ARP7, ARP9, LDB7, NPL6, RSC3, RSC30, RSC4, RSC58, RSC6, RSC8, RSC9, SFH1, STH1, HTL1 and probably RTT102. The complexes interact with histone and histone variant components of centromeric chromatin. Component of a fungal-specific module (HTL1-LDB7-NPL6-RSC3-RSC30) within the RSC complex.

The protein resides in the nucleus. In terms of biological role, component of the chromatin structure-remodeling complex (RSC), which is involved in transcription regulation and nucleosome positioning. RSC is responsible for the transfer of a histone octamer from a nucleosome core particle to naked DNA. The reaction requires ATP and involves an activated RSC-nucleosome intermediate. Remodeling reaction also involves DNA translocation, DNA twist and conformational change. As a reconfigurer of centromeric and flanking nucleosomes, RSC complex is required both for proper kinetochore function in chromosome segregation and, via a PKC1-dependent signaling pathway, for organization of the cellular cytoskeleton. This subunit is required for transcription of ribosomal protein genes and genes involved in the integrity of the cell wall. Together with HTL1, LDB7, NPL6, RSC3 components, defines a fungal-specific module within the RSC complex that plays a role in many cellular functions including the maintenance of cell wall integrity. This chain is Chromatin structure-remodeling complex protein RSC30 (RSC30), found in Saccharomyces cerevisiae (strain ATCC 204508 / S288c) (Baker's yeast).